The primary structure comprises 230 residues: Orotidine 5'-phosphate decarboxylase (230 aa).

Substrate contacts are provided by residues D10, K31, 58 to 67, T117, R179, Q188, G208, and R209; that span reads DLKLHDIPNT. The active-site Proton donor is K60.

It belongs to the OMP decarboxylase family. Type 1 subfamily. Homodimer.

It catalyses the reaction orotidine 5'-phosphate + H(+) = UMP + CO2. Its pathway is pyrimidine metabolism; UMP biosynthesis via de novo pathway; UMP from orotate: step 2/2. Functionally, catalyzes the decarboxylation of orotidine 5'-monophosphate (OMP) to uridine 5'-monophosphate (UMP). This chain is Orotidine 5'-phosphate decarboxylase, found in Staphylococcus epidermidis (strain ATCC 35984 / DSM 28319 / BCRC 17069 / CCUG 31568 / BM 3577 / RP62A).